Here is a 465-residue protein sequence, read N- to C-terminus: 23S rRNA (uracil(1939)-C(5))-methyltransferase RlmD (465 aa).

The disordered stretch occupies residues 1-22; it reads MSEAVPTSARKSKNAPVAPGPA. The TRAM domain maps to 16-80; that stretch reads PVAPGPAPVL…PSYEQATVVD (65 aa). Residues C93, C99, C102, and C181 each coordinate [4Fe-4S] cluster. Residues Q289, F318, N323, E339, N367, and D388 each coordinate S-adenosyl-L-methionine. The Nucleophile role is filled by C421.

Belongs to the class I-like SAM-binding methyltransferase superfamily. RNA M5U methyltransferase family. RlmD subfamily.

The enzyme catalyses uridine(1939) in 23S rRNA + S-adenosyl-L-methionine = 5-methyluridine(1939) in 23S rRNA + S-adenosyl-L-homocysteine + H(+). In terms of biological role, catalyzes the formation of 5-methyl-uridine at position 1939 (m5U1939) in 23S rRNA. The sequence is that of 23S rRNA (uracil(1939)-C(5))-methyltransferase RlmD from Burkholderia cenocepacia (strain HI2424).